A 267-amino-acid chain; its full sequence is Putative transcription factor Ovo-like 1 (267 aa).

C2H2-type zinc fingers lie at residues 118 to 140 (FTCHICQKAFTYQRMLNRHMKCH), 146 to 168 (HLCTYCGKGFNDTFDLKRHVRTH), 174 to 197 (YKCSLCDKAFTQRCSLESHLKKIH), and 213 to 235 (YVCEECGCTSESQEGHVLHLKEH).

It localises to the nucleus. Its function is as follows. Putative transcription factor. Involved in hair formation and spermatogenesis. May function in the differentiation and/or maintenance of the urogenital system. In Bos taurus (Bovine), this protein is Putative transcription factor Ovo-like 1 (OVOL1).